Consider the following 152-residue polypeptide: Transcriptional regulator MraZ (152 aa).

SpoVT-AbrB domains follow at residues 5–52 (ATLV…PLPE) and 81–124 (ASEC…DETT).

Belongs to the MraZ family. As to quaternary structure, forms oligomers.

It is found in the cytoplasm. The protein resides in the nucleoid. Its function is as follows. Negatively regulates its own expression and that of the subsequent genes in the proximal part of the division and cell wall (dcw) gene cluster. Acts by binding directly to DNA. May also regulate the expression of genes outside the dcw cluster. The sequence is that of Transcriptional regulator MraZ from Salmonella paratyphi A (strain ATCC 9150 / SARB42).